Here is a 254-residue protein sequence, read N- to C-terminus: Ubiquinone biosynthesis O-methyltransferase (254 aa).

S-adenosyl-L-methionine contacts are provided by arginine 47, glycine 76, aspartate 97, and leucine 141.

Belongs to the methyltransferase superfamily. UbiG/COQ3 family.

It carries out the reaction a 3-demethylubiquinol + S-adenosyl-L-methionine = a ubiquinol + S-adenosyl-L-homocysteine + H(+). The catalysed reaction is a 3-(all-trans-polyprenyl)benzene-1,2-diol + S-adenosyl-L-methionine = a 2-methoxy-6-(all-trans-polyprenyl)phenol + S-adenosyl-L-homocysteine + H(+). It functions in the pathway cofactor biosynthesis; ubiquinone biosynthesis. In terms of biological role, O-methyltransferase that catalyzes the 2 O-methylation steps in the ubiquinone biosynthetic pathway. The protein is Ubiquinone biosynthesis O-methyltransferase of Maricaulis maris (strain MCS10) (Caulobacter maris).